We begin with the raw amino-acid sequence, 305 residues long: Ornithine carbamoyltransferase (305 aa).

Carbamoyl phosphate is bound by residues 54–57 (STRT), Q81, R105, and 132–135 (HPCQ). Residues N163, D223, and 227 to 228 (SM) contribute to the L-ornithine site. Carbamoyl phosphate-binding positions include 262–263 (CL) and R290.

Belongs to the aspartate/ornithine carbamoyltransferase superfamily. OTCase family.

The protein resides in the cytoplasm. The enzyme catalyses carbamoyl phosphate + L-ornithine = L-citrulline + phosphate + H(+). The protein operates within amino-acid biosynthesis; L-arginine biosynthesis; L-arginine from L-ornithine and carbamoyl phosphate: step 1/3. In terms of biological role, reversibly catalyzes the transfer of the carbamoyl group from carbamoyl phosphate (CP) to the N(epsilon) atom of ornithine (ORN) to produce L-citrulline. In Agrobacterium fabrum (strain C58 / ATCC 33970) (Agrobacterium tumefaciens (strain C58)), this protein is Ornithine carbamoyltransferase.